The chain runs to 499 residues: Protein nucleotidyltransferase YdiU (499 aa).

ATP contacts are provided by G95, G97, R98, K117, D129, G130, R180, and R187. Catalysis depends on D256, which acts as the Proton acceptor. Residues N257 and D266 each coordinate Mg(2+). Residue D266 coordinates ATP.

It belongs to the SELO family. Mg(2+) serves as cofactor. Mn(2+) is required as a cofactor.

The enzyme catalyses L-seryl-[protein] + ATP = 3-O-(5'-adenylyl)-L-seryl-[protein] + diphosphate. It catalyses the reaction L-threonyl-[protein] + ATP = 3-O-(5'-adenylyl)-L-threonyl-[protein] + diphosphate. The catalysed reaction is L-tyrosyl-[protein] + ATP = O-(5'-adenylyl)-L-tyrosyl-[protein] + diphosphate. It carries out the reaction L-histidyl-[protein] + UTP = N(tele)-(5'-uridylyl)-L-histidyl-[protein] + diphosphate. The enzyme catalyses L-seryl-[protein] + UTP = O-(5'-uridylyl)-L-seryl-[protein] + diphosphate. It catalyses the reaction L-tyrosyl-[protein] + UTP = O-(5'-uridylyl)-L-tyrosyl-[protein] + diphosphate. Functionally, nucleotidyltransferase involved in the post-translational modification of proteins. It can catalyze the addition of adenosine monophosphate (AMP) or uridine monophosphate (UMP) to a protein, resulting in modifications known as AMPylation and UMPylation. In Dechloromonas aromatica (strain RCB), this protein is Protein nucleotidyltransferase YdiU.